The chain runs to 443 residues: uncharacterized protein (443 aa).

Residues His164 and Asp386 each act as proton acceptor in the active site.

Belongs to the plant acyltransferase family.

This is an uncharacterized protein from Arabidopsis thaliana (Mouse-ear cress).